A 377-amino-acid chain; its full sequence is Putrescine transport ATP-binding protein PotG (377 aa).

One can recognise an ABC transporter domain in the interval 20–250 (LEIRNLTKSY…PTTRYSAEFI (231 aa)). 52 to 59 (GASGCGKS) serves as a coordination point for ATP.

It belongs to the ABC transporter superfamily. The complex is composed of two ATP-binding proteins (PotG), two transmembrane proteins (PotH and PotI) and a solute-binding protein (PotF).

The protein resides in the cell inner membrane. It carries out the reaction putrescine(out) + ATP + H2O = putrescine(in) + ADP + phosphate + H(+). Its activity is regulated as follows. Transport is feedback inhibited by intracellular polyamines. Functionally, part of the ABC transporter complex PotFGHI involved in putrescine uptake. Responsible for energy coupling to the transport system. Imports putrescine for maintenance of the optimal concentration of polyamines necessary for cell growth in the presence of glucose. This Escherichia coli (strain K12) protein is Putrescine transport ATP-binding protein PotG.